Reading from the N-terminus, the 116-residue chain is Protein Rev (116 aa).

Residues serine 5 and serine 8 each carry the phosphoserine; by host CK2 modification. The segment at leucine 18–asparagine 26 is homomultimerization. The tract at residues tyrosine 23 to glutamine 49 is disordered. The short motif at threonine 34–arginine 50 is the Nuclear localization signal and RNA-binding (RRE) element. Residues glutamine 36–glutamate 47 show a composition bias toward basic residues. The Nuclear export signal and binding to XPO1 signature appears at leucine 73–aspartate 84. Phosphoserine; by host is present on residues serine 92 and serine 99.

It belongs to the HIV-1 REV protein family. As to quaternary structure, homomultimer; when bound to the RRE. Multimeric assembly is essential for activity and may involve XPO1. Binds to human KPNB1, XPO1, TNPO1, RANBP5 and IPO7. Interacts with the viral Integrase. Interacts with human KHDRBS1. Interacts with human NAP1; this interaction decreases Rev multimerization and stimulates its activity. Interacts with human DEAD-box helicases DDX3 and DDX24; these interactions may serve for viral RNA export to the cytoplasm and packaging, respectively. Interacts with human PSIP1; this interaction may inhibit HIV-1 DNA integration by promoting dissociation of the Integrase-LEDGF/p75 complex. Asymmetrically arginine dimethylated at one site by host PRMT6. Methylation impairs the RNA-binding activity and export of viral RNA from the nucleus to the cytoplasm. In terms of processing, phosphorylated by protein kinase CK2. Presence of, and maybe binding to the N-terminus of the regulatory beta subunit of CK2 is necessary for CK2-mediated Rev's phosphorylation.

It localises to the host nucleus. The protein localises to the host nucleolus. Its subcellular location is the host cytoplasm. Its function is as follows. Escorts unspliced or incompletely spliced viral pre-mRNAs (late transcripts) out of the nucleus of infected cells. These pre-mRNAs carry a recognition sequence called Rev responsive element (RRE) located in the env gene, that is not present in fully spliced viral mRNAs (early transcripts). This function is essential since most viral proteins are translated from unspliced or partially spliced pre-mRNAs which cannot exit the nucleus by the pathway used by fully processed cellular mRNAs. Rev itself is translated from a fully spliced mRNA that readily exits the nucleus. Rev's nuclear localization signal (NLS) binds directly to KPNB1/Importin beta-1 without previous binding to KPNA1/Importin alpha-1. KPNB1 binds to the GDP bound form of RAN (Ran-GDP) and targets Rev to the nucleus. In the nucleus, the conversion from Ran-GDP to Ran-GTP dissociates Rev from KPNB1 and allows Rev's binding to the RRE in viral pre-mRNAs. Rev multimerization on the RRE via cooperative assembly exposes its nuclear export signal (NES) to the surface. Rev can then form a complex with XPO1/CRM1 and Ran-GTP, leading to nuclear export of the complex. Conversion from Ran-GTP to Ran-GDP mediates dissociation of the Rev/RRE/XPO1/RAN complex, so that Rev can return to the nucleus for a subsequent round of export. Beside KPNB1, also seems to interact with TNPO1/Transportin-1, RANBP5/IPO5 and IPO7/RANBP7 for nuclear import. The nucleoporin-like HRB/RIP is an essential cofactor that probably indirectly interacts with Rev to release HIV RNAs from the perinuclear region to the cytoplasm. The sequence is that of Protein Rev from Human immunodeficiency virus type 1 group M subtype B (isolate HXB3) (HIV-1).